We begin with the raw amino-acid sequence, 364 residues long: MKFNEFLNHLSNYEPGKDIEVIAKEYGVKEVIKLASNENPFGTPPKAIECLRQNANKAHLYPDDSMIELKSTLAQKYKVQNENIIIGAGSDQVIEFAIHAKLNSKNAFLQAGVTFAMYEIYAKQCGAKCYKTQSITHDLNEFKKLYEAHKDEIKLIFLCLPNNPLGECLDASEVTKFIKGVDEDCLVVIDAAYNEFASFKDSKKHLEPCELIKEFDNVLYLGTFSKLYGLGGLRIGYGIANANIINAFYKLRAPFNVSNLALKAAVAAIDDDEFTKKTLENNFSQMQLYKEFAKKHNIKIIDSYTNFITYFFDEKNSTDLSEKLLKKGIIIRNLKSYGLNAIRITIGTSYENEKFFTEFDKILR.

The residue at position 226 (K226) is an N6-(pyridoxal phosphate)lysine.

Belongs to the class-II pyridoxal-phosphate-dependent aminotransferase family. Histidinol-phosphate aminotransferase subfamily. In terms of assembly, homodimer. Requires pyridoxal 5'-phosphate as cofactor.

The catalysed reaction is L-histidinol phosphate + 2-oxoglutarate = 3-(imidazol-4-yl)-2-oxopropyl phosphate + L-glutamate. It participates in amino-acid biosynthesis; L-histidine biosynthesis; L-histidine from 5-phospho-alpha-D-ribose 1-diphosphate: step 7/9. The protein is Histidinol-phosphate aminotransferase of Campylobacter jejuni subsp. jejuni serotype O:6 (strain 81116 / NCTC 11828).